Here is a 192-residue protein sequence, read N- to C-terminus: SPbeta prophage-derived uncharacterized protein YokK (192 aa).

In Bacillus subtilis (strain 168), this protein is SPbeta prophage-derived uncharacterized protein YokK (yokK).